A 152-amino-acid chain; its full sequence is Ribosome maturation factor RimP (152 aa).

Belongs to the RimP family.

The protein localises to the cytoplasm. Functionally, required for maturation of 30S ribosomal subunits. The protein is Ribosome maturation factor RimP of Rubrobacter xylanophilus (strain DSM 9941 / JCM 11954 / NBRC 16129 / PRD-1).